The primary structure comprises 251 residues: Coenzyme F420:L-glutamate ligase (251 aa).

GTP contacts are provided by residues 9-12 (LPEI), 38-39 (ST), and K43. D113 serves as a coordination point for a divalent metal cation. A GTP-binding site is contributed by N116. Residues D149, T150, and E207 each contribute to the a divalent metal cation site. Residue 205-212 (AGEGDGGT) participates in GTP binding.

The protein belongs to the CofE family. As to quaternary structure, homodimer. Mg(2+) is required as a cofactor. The cofactor is Mn(2+). Requires K(+) as cofactor.

It catalyses the reaction oxidized coenzyme F420-0 + GTP + L-glutamate = oxidized coenzyme F420-1 + GDP + phosphate + H(+). The catalysed reaction is oxidized coenzyme F420-1 + GTP + L-glutamate = oxidized coenzyme F420-2 + GDP + phosphate + H(+). It functions in the pathway cofactor biosynthesis; coenzyme F420 biosynthesis. Catalyzes the GTP-dependent successive addition of two or more gamma-linked L-glutamates to the L-lactyl phosphodiester of 7,8-didemethyl-8-hydroxy-5-deazariboflavin (F420-0) to form coenzyme F420-0-glutamyl-glutamate (F420-2) or polyglutamated F420 derivatives. The protein is Coenzyme F420:L-glutamate ligase of Halorubrum lacusprofundi (strain ATCC 49239 / DSM 5036 / JCM 8891 / ACAM 34).